Here is an 88-residue protein sequence, read N- to C-terminus: Large ribosomal subunit protein bL27 (88 aa).

The disordered stretch occupies residues 1–21 (MAHKKGQGSTQNNRDSAGRRL).

This sequence belongs to the bacterial ribosomal protein bL27 family.

The protein is Large ribosomal subunit protein bL27 of Helicobacter pylori (strain P12).